The primary structure comprises 784 residues: Replication protein A 70 kDa DNA-binding subunit E (784 aa).

The interval 114-224 (HPVPGGKHND…NRGPVARNEA (111 aa)) is disordered. Polar residues-rich tracts occupy residues 132–148 (KFNT…QVNN) and 167–190 (SSVP…NGVT). A DNA-binding region (OB) is located at residues 241–327 (WTIKARVTNK…RNDYEIMLDN (87 aa)). The C4-type zinc finger occupies 532-558 (CPIMNGDRPCSKKVTDNGDGTWRCEKC). Disordered stretches follow at residues 678–707 (LPIN…PSSV) and 746–784 (AKCP…VGSY). Residues 695 to 707 (GIGSSGTRDPSSV) show a composition bias toward polar residues. The span at 760-776 (YMGGSYRGTTGSYGGGL) shows a compositional bias: gly residues.

This sequence belongs to the replication factor A protein 1 family. As to quaternary structure, heterotrimer of RPA1, RPA2 and RPA3 (canonical replication protein A complex).

It is found in the nucleus. Component of the replication protein A complex (RPA) required for DNA recombination, repair and replication. The activity of RPA is mediated by single-stranded DNA binding and protein interactions. Probably involved in repair of double-strand DNA breaks (DSBs) induced by genotoxic stresses. This chain is Replication protein A 70 kDa DNA-binding subunit E (RPA1E), found in Arabidopsis thaliana (Mouse-ear cress).